The primary structure comprises 410 residues: Arginine deiminase (410 aa).

Cys399 (amidino-cysteine intermediate) is an active-site residue.

The protein belongs to the arginine deiminase family.

The protein resides in the cytoplasm. It carries out the reaction L-arginine + H2O = L-citrulline + NH4(+). Its pathway is amino-acid degradation; L-arginine degradation via ADI pathway; carbamoyl phosphate from L-arginine: step 1/2. The protein is Arginine deiminase of Listeria monocytogenes serovar 1/2a (strain ATCC BAA-679 / EGD-e).